The chain runs to 371 residues: Aminomethyltransferase (371 aa).

Belongs to the GcvT family. The glycine cleavage system is composed of four proteins: P, T, L and H.

It catalyses the reaction N(6)-[(R)-S(8)-aminomethyldihydrolipoyl]-L-lysyl-[protein] + (6S)-5,6,7,8-tetrahydrofolate = N(6)-[(R)-dihydrolipoyl]-L-lysyl-[protein] + (6R)-5,10-methylene-5,6,7,8-tetrahydrofolate + NH4(+). Functionally, the glycine cleavage system catalyzes the degradation of glycine. This Oceanobacillus iheyensis (strain DSM 14371 / CIP 107618 / JCM 11309 / KCTC 3954 / HTE831) protein is Aminomethyltransferase.